The sequence spans 215 residues: Large ribosomal subunit protein uL4 (215 aa).

The interval 43–97 (RRQGTHSTKTRAEVSGGGKKPWRQKGTGRARAGSTRSPIWVGGGKTHTPKPRDYS) is disordered.

This sequence belongs to the universal ribosomal protein uL4 family. Part of the 50S ribosomal subunit.

One of the primary rRNA binding proteins, this protein initially binds near the 5'-end of the 23S rRNA. It is important during the early stages of 50S assembly. It makes multiple contacts with different domains of the 23S rRNA in the assembled 50S subunit and ribosome. In terms of biological role, forms part of the polypeptide exit tunnel. This chain is Large ribosomal subunit protein uL4, found in Brachyspira hyodysenteriae (strain ATCC 49526 / WA1).